The primary structure comprises 446 residues: Gasdermin-A (446 aa).

Residues 1–252 form a triggers pyroptosis region; it reads MTMFENVTRA…FILIQASDVG (252 aa). Residue 9 to 13 coordinates a cardiolipin; it reads RALAR. 4 consecutive transmembrane segments (beta stranded) span residues 78–95, 99–120, 164–180, and 184–198; these read NFSF…DVDV, VKVK…TLSV, VTLE…SLPF, and LGLQ…AVTI.

It belongs to the gasdermin family. Homooligomer; homooligomeric ring-shaped pore complex containing 18-36 subunits when inserted in the membrane. Post-translationally, cleavage by bacterial SpeB relieves autoinhibition by releasing the N-terminal moiety (Gasdermin-A, N-terminal) that initiates pyroptosis. In terms of processing, palmitoylated. In terms of tissue distribution, expressed predominantly in the gastrointestinal (GI) tract and in the skin at a lower level. In the GI tract, the expression is highly restricted to the esophagus and forestomach.

It is found in the cytoplasm. The protein resides in the perinuclear region. Its subcellular location is the cytosol. It localises to the cell membrane. Its activity is regulated as follows. The full-length protein before cleavage is inactive: intramolecular interactions between N- and C-terminal domains mediate autoinhibition in the absence of activation signal. The intrinsic pyroptosis-inducing activity is carried by the released N-terminal moiety (Gasdermin-A, N-terminal) following cleavage by bacterial effector protein SpeB. In terms of biological role, this form constitutes the precursor of the pore-forming protein and acts as a sensor of bacterial infection: upon infection, specifically cleaved by bacterial effector protein SpeB in epithelial cells, releasing the N-terminal moiety (Gasdermin-A, N-terminal) that binds to membranes and forms pores, triggering pyroptosis. Pore-forming protein that causes membrane permeabilization and pyroptosis. Released upon cleavage by bacterial effector protein SpeB, and binds to membrane inner leaflet lipids. Homooligomerizes within the membrane and forms pores of 10-15 nanometers (nm) of inner diameter, triggering pyroptosis. Pyroptosis triggers the elimination of the infected skin cell, depriving the pathogen of its protective niche, while inducing an inflammatory response. This ultimately prevents bacterial penetration of the epithelial barrier and a subsequent systemic dissemination of the pathogen. Binds to cardiolipin and other acidic phospholipids, such as phosphatidylserine, which mediate its targeting to the inner leaflet membrane. In Mus musculus (Mouse), this protein is Gasdermin-A (Gsdma).